Here is a 310-residue protein sequence, read N- to C-terminus: Protein translocase subunit SecF (310 aa).

The next 6 helical transmembrane spans lie at 18-38 (FFTISGLLLLLTVGAFIYRGG), 135-155 (QAVYAFLFAFLVMIVYVAFRF), 162-182 (IVSVVGIIHDIVISLGFVILA), 188-208 (ITIVAALLTVVGYSINDTIVL), 240-260 (IVTSLTVFIVACSLFFFGGEV), and 267-287 (IMIIGTVLGVFSTIFVCAPLI).

Belongs to the SecD/SecF family. SecF subfamily. Forms a complex with SecD. Part of the essential Sec protein translocation apparatus which comprises SecA, SecYEG and auxiliary proteins SecDF. Other proteins may also be involved.

It is found in the cell inner membrane. In terms of biological role, part of the Sec protein translocase complex. Interacts with the SecYEG preprotein conducting channel. SecDF uses the proton motive force (PMF) to complete protein translocation after the ATP-dependent function of SecA. The chain is Protein translocase subunit SecF from Endomicrobium trichonymphae.